Here is a 156-residue protein sequence, read N- to C-terminus: MPRRGHVPKREVQPDPVYNSELVTRVINKIMLDGKKALAQRIFYEAIDKASAKLGKEPMEVLEGALKNIMPVVETRSRRVGGATYQVPMEVRPERRQALGIRWLVQFARARGERTMVERLAAELVDAFNNTGGAVKKKEEVHRMAEANKPFAHYRW.

The protein belongs to the universal ribosomal protein uS7 family. In terms of assembly, part of the 30S ribosomal subunit. Contacts proteins S9 and S11.

Its function is as follows. One of the primary rRNA binding proteins, it binds directly to 16S rRNA where it nucleates assembly of the head domain of the 30S subunit. Is located at the subunit interface close to the decoding center, probably blocks exit of the E-site tRNA. This is Small ribosomal subunit protein uS7 from Symbiobacterium thermophilum (strain DSM 24528 / JCM 14929 / IAM 14863 / T).